The primary structure comprises 218 residues: Eukaryotic translation initiation factor 3 subunit K (218 aa).

Ala2 bears the N-acetylalanine mark. Position 28 is a phosphothreonine (Thr28). Residues 42-204 (YDLEANLAVL…SIKPKNIVEK (163 aa)) form the PCI domain. Ser217 carries the phosphoserine modification.

In terms of assembly, component of the eukaryotic translation initiation factor 3 (eIF-3) complex, which is composed of 13 subunits: EIF3A, EIF3B, EIF3C, EIF3D, EIF3E, EIF3F, EIF3G, EIF3H, EIF3I, EIF3J, EIF3K, EIF3L and EIF3M. The eIF-3 complex appears to include 3 stable modules: module A is composed of EIF3A, EIF3B, EIF3G and EIF3I; module B is composed of EIF3F, EIF3H, and EIF3M; and module C is composed of EIF3C, EIF3D, EIF3E, EIF3K and EIF3L. EIF3C of module C binds EIF3B of module A and EIF3H of module B, thereby linking the three modules. EIF3J is a labile subunit that binds to the eIF-3 complex via EIF3B. The eIF-3 complex interacts with RPS6KB1 under conditions of nutrient depletion. Mitogenic stimulation leads to binding and activation of a complex composed of MTOR and RPTOR, leading to phosphorylation and release of RPS6KB1 and binding of EIF4B to eIF-3. Interacts with CCND3, but not with CCND1 and CCND2. Ubiquitous, with the highest levels of expression in brain, testis and kidney.

It localises to the nucleus. It is found in the cytoplasm. In terms of biological role, component of the eukaryotic translation initiation factor 3 (eIF-3) complex, which is required for several steps in the initiation of protein synthesis. The eIF-3 complex associates with the 40S ribosome and facilitates the recruitment of eIF-1, eIF-1A, eIF-2:GTP:methionyl-tRNAi and eIF-5 to form the 43S pre-initiation complex (43S PIC). The eIF-3 complex stimulates mRNA recruitment to the 43S PIC and scanning of the mRNA for AUG recognition. The eIF-3 complex is also required for disassembly and recycling of post-termination ribosomal complexes and subsequently prevents premature joining of the 40S and 60S ribosomal subunits prior to initiation. The eIF-3 complex specifically targets and initiates translation of a subset of mRNAs involved in cell proliferation, including cell cycling, differentiation and apoptosis, and uses different modes of RNA stem-loop binding to exert either translational activation or repression. The sequence is that of Eukaryotic translation initiation factor 3 subunit K from Homo sapiens (Human).